We begin with the raw amino-acid sequence, 188 residues long: UPF0340 protein SSU98_0310 (188 aa).

The protein belongs to the UPF0340 family.

This Streptococcus suis (strain 98HAH33) protein is UPF0340 protein SSU98_0310.